A 439-amino-acid polypeptide reads, in one-letter code: Exodeoxyribonuclease 7 large subunit (439 aa).

Belongs to the XseA family. As to quaternary structure, heterooligomer composed of large and small subunits.

It is found in the cytoplasm. It catalyses the reaction Exonucleolytic cleavage in either 5'- to 3'- or 3'- to 5'-direction to yield nucleoside 5'-phosphates.. Bidirectionally degrades single-stranded DNA into large acid-insoluble oligonucleotides, which are then degraded further into small acid-soluble oligonucleotides. This chain is Exodeoxyribonuclease 7 large subunit, found in Haemophilus influenzae (strain ATCC 51907 / DSM 11121 / KW20 / Rd).